A 504-amino-acid polypeptide reads, in one-letter code: Cytochrome P450 6B2 (504 aa).

Cys445 contacts heme.

Belongs to the cytochrome P450 family. It depends on heme as a cofactor.

The protein localises to the endoplasmic reticulum membrane. The protein resides in the microsome membrane. The enzyme catalyses an organic molecule + reduced [NADPH--hemoprotein reductase] + O2 = an alcohol + oxidized [NADPH--hemoprotein reductase] + H2O + H(+). In Helicoverpa armigera (Cotton bollworm), this protein is Cytochrome P450 6B2 (CYP6B2).